Here is a 400-residue protein sequence, read N- to C-terminus: Inositol polyphosphate 1-phosphatase (400 aa).

D54 provides a ligand contact to Li(+). Mg(2+) is bound at residue E79. E80 lines the Li(+) pocket. Mg(2+) is bound by residues D153 and I155. 1D-myo-inositol 1,4-bisphosphate-binding residues include D156, S157, and T158. Positions S238–G257 are enriched in polar residues. Residues S238–S258 are disordered. Residues S268, K270, G290, A291, K294, and T312 each contribute to the 1D-myo-inositol 1,4-bisphosphate site. D317 contacts Mg(2+). Position 318 is a phosphoserine (S318).

Belongs to the inositol monophosphatase superfamily. Monomer. The cofactor is Mg(2+).

The enzyme catalyses 1D-myo-inositol 1,4-bisphosphate + H2O = 1D-myo-inositol 4-phosphate + phosphate. It catalyses the reaction 1D-myo-inositol 1,3,4-trisphosphate + H2O = 1D-myo-inositol 3,4-bisphosphate + phosphate. Its pathway is signal transduction; phosphatidylinositol signaling pathway. Inhibited by Li(+). Functionally, mg(2+)-dependent phosphatase that catalyzes the hydrolysis of the 1-position phosphate from inositol 1,4-bisphosphate and inositol 1,3,4-trisphosphate and participates in inositol phosphate metabolism. The sequence is that of Inositol polyphosphate 1-phosphatase from Bos taurus (Bovine).